The sequence spans 454 residues: tRNA modification GTPase MnmE (454 aa).

Residues Arg-23, Glu-80, and Lys-120 each contribute to the (6S)-5-formyl-5,6,7,8-tetrahydrofolate site. A TrmE-type G domain is found at 216-377 (GMKVVIAGRP…LRNHLKQSMG (162 aa)). Asn-226 is a binding site for K(+). Residues 226–231 (NAGKSS), 245–251 (TDIAGTT), 270–273 (DTAG), 335–338 (NKAD), and 358–360 (SAR) each bind GTP. Ser-230 contributes to the Mg(2+) binding site. K(+) contacts are provided by Thr-245, Ile-247, and Thr-250. Thr-251 contacts Mg(2+). Lys-454 lines the (6S)-5-formyl-5,6,7,8-tetrahydrofolate pocket.

Belongs to the TRAFAC class TrmE-Era-EngA-EngB-Septin-like GTPase superfamily. TrmE GTPase family. Homodimer. Heterotetramer of two MnmE and two MnmG subunits. It depends on K(+) as a cofactor.

It localises to the cytoplasm. Exhibits a very high intrinsic GTPase hydrolysis rate. Involved in the addition of a carboxymethylaminomethyl (cmnm) group at the wobble position (U34) of certain tRNAs, forming tRNA-cmnm(5)s(2)U34. The sequence is that of tRNA modification GTPase MnmE from Shigella sonnei (strain Ss046).